A 349-amino-acid polypeptide reads, in one-letter code: Nitrilase, bromoxynil-specific (349 aa).

A CN hydrolase domain is found at 5–274 (FKAAAVQAEP…EGIVYAEIDL (270 aa)). Glu-45 functions as the Proton acceptor in the catalytic mechanism. Lys-127 (proton donor) is an active-site residue. Catalysis depends on Cys-161, which acts as the Nucleophile.

This sequence belongs to the carbon-nitrogen hydrolase superfamily. Nitrilase family. As to quaternary structure, homodimer.

The catalysed reaction is a nitrile + 2 H2O = a carboxylate + NH4(+). Functionally, specific for the herbicide bromoxynil (3,5-dibromo-4-hydroxybenzonitrile); converts it to its metabolite 3,5-dibromo-4-hydroxybenzoic acid. This Klebsiella pneumoniae subsp. ozaenae protein is Nitrilase, bromoxynil-specific (bxn).